A 281-amino-acid polypeptide reads, in one-letter code: Sulfur carrier protein FdhD (281 aa).

The active-site Cysteine persulfide intermediate is Cys-117.

This sequence belongs to the FdhD family.

The protein localises to the cytoplasm. In terms of biological role, required for formate dehydrogenase (FDH) activity. Acts as a sulfur carrier protein that transfers sulfur from IscS to the molybdenum cofactor prior to its insertion into FDH. The polypeptide is Sulfur carrier protein FdhD (Xanthomonas campestris pv. campestris (strain 8004)).